A 161-amino-acid polypeptide reads, in one-letter code: Lipoprotein signal peptidase (161 aa).

Helical transmembrane passes span 11–31, 44–64, 66–86, and 100–120; these read PLFW…KLWV, LWSG…FSAF, GGAG…IIFA, and GCIL…GHVI. Residues Asp121 and Asp137 contribute to the active site. Residues 135–155 form a helical membrane-spanning segment; it reads LADVSINIGIAALLWASFFPV.

Belongs to the peptidase A8 family.

The protein resides in the cell inner membrane. It catalyses the reaction Release of signal peptides from bacterial membrane prolipoproteins. Hydrolyzes -Xaa-Yaa-Zaa-|-(S,diacylglyceryl)Cys-, in which Xaa is hydrophobic (preferably Leu), and Yaa (Ala or Ser) and Zaa (Gly or Ala) have small, neutral side chains.. It participates in protein modification; lipoprotein biosynthesis (signal peptide cleavage). Its function is as follows. This protein specifically catalyzes the removal of signal peptides from prolipoproteins. The chain is Lipoprotein signal peptidase from Synechocystis sp. (strain ATCC 27184 / PCC 6803 / Kazusa).